Reading from the N-terminus, the 560-residue chain is NRAMP-like transporter smf-3 (560 aa).

The Cytoplasmic portion of the chain corresponds to 1–43 (MEGEMKCPIEEIREKPEMRKAQQTYEVQVEVEDTPDTTFSWRK). Residues 44–64 (LWAFTGPGFLMSIAYLDPGNI) traverse the membrane as a helical segment. Topologically, residues 65-71 (ESDLQAG) are extracellular. Residues 72-92 (AISYFKLIWVLLVAHIMGLLL) form a helical membrane-spanning segment. The Cytoplasmic segment spans residues 93–120 (QRLAARLGVVSGKHMAEIAFSYYPKIPR). Residues 121–141 (LVLWMLVESAIVGSDMQEVIG) form a helical membrane-spanning segment. Topologically, residues 142–152 (TAISFYLLSNG) are extracellular. Residues 153-173 (VIPLWAGVLITICDTFTFLFL) traverse the membrane as a helical segment. At 174–182 (EKYGVRKFE) the chain is on the cytoplasmic side. A helical membrane pass occupies residues 183-203 (AFFCFLITCMAITFGYEFGVS). Residues 204–229 (APDAGKMFSGMFVPWCNGCDNNMVMQ) are Extracellular-facing. Residues 230 to 250 (GVAIIGAVIMPHNFYLHSALV) form a helical membrane-spanning segment. The Cytoplasmic portion of the chain corresponds to 251 to 268 (KSRRVDRRRAEKVTEANK). A helical transmembrane segment spans residues 269–289 (YFFIESAFALFVSFIINTLVI). The Extracellular portion of the chain corresponds to 290–339 (SVFAQGMYGKTNQDIRDTCYNNTHNGMPDFYKVEFPANNDAAQSDIYHAG). Asn310 is a glycosylation site (N-linked (GlcNAc...) asparagine). The chain crosses the membrane as a helical span at residues 340-360 (IFLGCTFGIFALYVWAVGILA). Residues 361 to 390 (AGQSSTMTGTYAGQFAMEGFIQIKLPQWKR) lie on the Cytoplasmic side of the membrane. Residues 391 to 411 (ILITRSLAILPTLAVVIFSGG) traverse the membrane as a helical segment. Residues 412-420 (IDNISSLND) are Extracellular-facing. N-linked (GlcNAc...) asparagine glycosylation is present at Asn414. A helical membrane pass occupies residues 421–441 (FLNCLQLIQLPFALIPVLTFV). Over 442 to 458 (SDRNIMHEYKLASVSKV) the chain is Cytoplasmic. A helical transmembrane segment spans residues 459 to 479 (VSIVISLIILFINFYFLYSWI). At 480–486 (GSTFGYN) the chain is on the extracellular side. The chain crosses the membrane as a helical span at residues 487 to 507 (AVSIPITIFCAIFYIIFIAYL). Over 508–560 (TYYCLVAMEFISPIQTKWLAEPIYHDFDAPWLEDSENPSTKNTISDDELSMRY) the chain is Cytoplasmic.

It belongs to the NRAMP family. Expressed in dopaminergic neurons (at protein level). Expressed in intestine with a weaker expression in the most proximal and distal regions. Weakly expressed in the hyp1-6, hyp7 and hyp8-12 hypodermis and in head and tail neurons.

It is found in the apical cell membrane. It localises to the cytoplasmic vesicle membrane. Functionally, probable divalent metal ion transporter which regulates the uptake of several heavy metals such as Mn(2+), Al(3+) and iron. Plays a role in modulating Al(3+)-induced dopamine (DA) neuron degeneration through the intracellular sequestration of Al(3+). This is NRAMP-like transporter smf-3 from Caenorhabditis elegans.